Reading from the N-terminus, the 473-residue chain is Aspartyl/glutamyl-tRNA(Asn/Gln) amidotransferase subunit B (473 aa).

The protein belongs to the GatB/GatE family. GatB subfamily. Heterotrimer of A, B and C subunits.

It catalyses the reaction L-glutamyl-tRNA(Gln) + L-glutamine + ATP + H2O = L-glutaminyl-tRNA(Gln) + L-glutamate + ADP + phosphate + H(+). The catalysed reaction is L-aspartyl-tRNA(Asn) + L-glutamine + ATP + H2O = L-asparaginyl-tRNA(Asn) + L-glutamate + ADP + phosphate + 2 H(+). Functionally, allows the formation of correctly charged Asn-tRNA(Asn) or Gln-tRNA(Gln) through the transamidation of misacylated Asp-tRNA(Asn) or Glu-tRNA(Gln) in organisms which lack either or both of asparaginyl-tRNA or glutaminyl-tRNA synthetases. The reaction takes place in the presence of glutamine and ATP through an activated phospho-Asp-tRNA(Asn) or phospho-Glu-tRNA(Gln). In Sulfurisphaera tokodaii (strain DSM 16993 / JCM 10545 / NBRC 100140 / 7) (Sulfolobus tokodaii), this protein is Aspartyl/glutamyl-tRNA(Asn/Gln) amidotransferase subunit B.